A 256-amino-acid polypeptide reads, in one-letter code: uncharacterized protein (256 aa).

The N-terminal stretch at 1-23 is a signal peptide; that stretch reads MKRLNKLVLGIIFLFLVISITAG. Residue Cys-24 is the site of N-palmitoyl cysteine attachment. Cys-24 carries S-diacylglycerol cysteine lipidation.

Belongs to the staphylococcal tandem lipoprotein family.

It localises to the cell membrane. This is an uncharacterized protein from Staphylococcus aureus (strain COL).